A 345-amino-acid polypeptide reads, in one-letter code: Holliday junction branch migration complex subunit RuvB (345 aa).

The segment at 4-185 (TDRLIAPSTQ…FGIVSRLEFY (182 aa)) is large ATPase domain (RuvB-L). Residues Leu-24, Arg-25, Gly-66, Lys-69, Thr-70, Thr-71, 132–134 (EDY), Arg-175, Tyr-185, and Arg-222 contribute to the ATP site. A Mg(2+)-binding site is contributed by Thr-70. The tract at residues 186–256 (TADELARIVH…IADAALKMLD (71 aa)) is small ATPAse domain (RuvB-S). Positions 259-345 (KLGFDVMDRK…KIGTGELWQQ (87 aa)) are head domain (RuvB-H). 3 residues coordinate DNA: Arg-295, Arg-314, and Arg-319.

The protein belongs to the RuvB family. In terms of assembly, homohexamer. Forms an RuvA(8)-RuvB(12)-Holliday junction (HJ) complex. HJ DNA is sandwiched between 2 RuvA tetramers; dsDNA enters through RuvA and exits via RuvB. An RuvB hexamer assembles on each DNA strand where it exits the tetramer. Each RuvB hexamer is contacted by two RuvA subunits (via domain III) on 2 adjacent RuvB subunits; this complex drives branch migration. In the full resolvosome a probable DNA-RuvA(4)-RuvB(12)-RuvC(2) complex forms which resolves the HJ.

It localises to the cytoplasm. The enzyme catalyses ATP + H2O = ADP + phosphate + H(+). Its function is as follows. The RuvA-RuvB-RuvC complex processes Holliday junction (HJ) DNA during genetic recombination and DNA repair, while the RuvA-RuvB complex plays an important role in the rescue of blocked DNA replication forks via replication fork reversal (RFR). RuvA specifically binds to HJ cruciform DNA, conferring on it an open structure. The RuvB hexamer acts as an ATP-dependent pump, pulling dsDNA into and through the RuvAB complex. RuvB forms 2 homohexamers on either side of HJ DNA bound by 1 or 2 RuvA tetramers; 4 subunits per hexamer contact DNA at a time. Coordinated motions by a converter formed by DNA-disengaged RuvB subunits stimulates ATP hydrolysis and nucleotide exchange. Immobilization of the converter enables RuvB to convert the ATP-contained energy into a lever motion, pulling 2 nucleotides of DNA out of the RuvA tetramer per ATP hydrolyzed, thus driving DNA branch migration. The RuvB motors rotate together with the DNA substrate, which together with the progressing nucleotide cycle form the mechanistic basis for DNA recombination by continuous HJ branch migration. Branch migration allows RuvC to scan DNA until it finds its consensus sequence, where it cleaves and resolves cruciform DNA. This chain is Holliday junction branch migration complex subunit RuvB, found in Methylobacillus flagellatus (strain ATCC 51484 / DSM 6875 / VKM B-1610 / KT).